The following is a 218-amino-acid chain: Pyridoxine/pyridoxamine 5'-phosphate oxidase (218 aa).

Substrate contacts are provided by residues 14–17 (RREY) and K72. FMN is bound by residues 67–72 (RIVLLK), 82–83 (YT), R88, K89, and Q111. Substrate is bound by residues Y129, R133, and S137. FMN-binding positions include 146–147 (QS) and W191. Residue 197-199 (RLH) participates in substrate binding. FMN is bound at residue R201.

The protein belongs to the pyridoxamine 5'-phosphate oxidase family. Homodimer. FMN is required as a cofactor.

The enzyme catalyses pyridoxamine 5'-phosphate + O2 + H2O = pyridoxal 5'-phosphate + H2O2 + NH4(+). The catalysed reaction is pyridoxine 5'-phosphate + O2 = pyridoxal 5'-phosphate + H2O2. Its pathway is cofactor metabolism; pyridoxal 5'-phosphate salvage; pyridoxal 5'-phosphate from pyridoxamine 5'-phosphate: step 1/1. The protein operates within cofactor metabolism; pyridoxal 5'-phosphate salvage; pyridoxal 5'-phosphate from pyridoxine 5'-phosphate: step 1/1. In terms of biological role, catalyzes the oxidation of either pyridoxine 5'-phosphate (PNP) or pyridoxamine 5'-phosphate (PMP) into pyridoxal 5'-phosphate (PLP). This is Pyridoxine/pyridoxamine 5'-phosphate oxidase from Escherichia coli O139:H28 (strain E24377A / ETEC).